Consider the following 91-residue polypeptide: Small ribosomal subunit protein uS15 (91 aa).

Belongs to the universal ribosomal protein uS15 family. As to quaternary structure, part of the 30S ribosomal subunit. Forms a bridge to the 50S subunit in the 70S ribosome, contacting the 23S rRNA.

One of the primary rRNA binding proteins, it binds directly to 16S rRNA where it helps nucleate assembly of the platform of the 30S subunit by binding and bridging several RNA helices of the 16S rRNA. Functionally, forms an intersubunit bridge (bridge B4) with the 23S rRNA of the 50S subunit in the ribosome. This is Small ribosomal subunit protein uS15 from Rickettsia bellii (strain OSU 85-389).